The following is a 102-amino-acid chain: Small ribosomal subunit protein uS10 (102 aa).

Belongs to the universal ribosomal protein uS10 family. Part of the 30S ribosomal subunit.

Involved in the binding of tRNA to the ribosomes. The polypeptide is Small ribosomal subunit protein uS10 (Pyrococcus abyssi (strain GE5 / Orsay)).